A 168-amino-acid chain; its full sequence is G/U mismatch-specific DNA glycosylase (168 aa).

This sequence belongs to the uracil-DNA glycosylase (UDG) superfamily. TDG/mug family. Binds DNA as a monomer.

The protein resides in the cytoplasm. It carries out the reaction Specifically hydrolyzes mismatched double-stranded DNA and polynucleotides, releasing free uracil.. In terms of biological role, excises ethenocytosine and uracil, which can arise by alkylation or deamination of cytosine, respectively, from the corresponding mispairs with guanine in ds-DNA. It is capable of hydrolyzing the carbon-nitrogen bond between the sugar-phosphate backbone of the DNA and the mispaired base. The complementary strand guanine functions in substrate recognition. Required for DNA damage lesion repair in stationary-phase cells. This Escherichia coli O139:H28 (strain E24377A / ETEC) protein is G/U mismatch-specific DNA glycosylase.